Here is a 240-residue protein sequence, read N- to C-terminus: MAQKINPISFRLGTTQVWNSTLQIYGKSFKNYFSIVNNQLNLQNFIIRYVKLNGFQINYYEWKMHKNKTFLSIYFSPSFNNGKLNLTNFKQLSNLLSNWCSNKFIFHFYLNSKWSLTSNFLTLYTKYLVEQKLGPKKIIVILCNFLQDQLNSSKVMHFKFGFIETKLVGFKIRLVGRFDSSNQMAKSFDQTIGTLSLTNLSSFVEYSNIEIHTKLGTCGVQVWLFFTPKKFINGYNQKNS.

The protein belongs to the universal ribosomal protein uS3 family.

It localises to the mitochondrion. The protein is Small ribosomal subunit protein uS3m (RPS3) of Chondrus crispus (Carrageen Irish moss).